Reading from the N-terminus, the 396-residue chain is Acetate kinase (396 aa).

Asn-7 is a binding site for Mg(2+). ATP is bound at residue Lys-14. Arg-89 is a binding site for substrate. The active-site Proton donor/acceptor is the Asp-146. ATP-binding positions include 206–210 (HLGNG), 280–282 (DLR), and 328–332 (GIGEN). Glu-382 contributes to the Mg(2+) binding site.

The protein belongs to the acetokinase family. In terms of assembly, homodimer. Mg(2+) is required as a cofactor. The cofactor is Mn(2+).

It localises to the cytoplasm. It catalyses the reaction acetate + ATP = acetyl phosphate + ADP. It functions in the pathway metabolic intermediate biosynthesis; acetyl-CoA biosynthesis; acetyl-CoA from acetate: step 1/2. In terms of biological role, catalyzes the formation of acetyl phosphate from acetate and ATP. Can also catalyze the reverse reaction. The protein is Acetate kinase of Maridesulfovibrio salexigens (strain ATCC 14822 / DSM 2638 / NCIMB 8403 / VKM B-1763) (Desulfovibrio salexigens).